Consider the following 710-residue polypeptide: Elongation factor G (710 aa).

The 283-residue stretch at 8 to 290 (SQYRNIGISA…AIVEYLPSPM (283 aa)) folds into the tr-type G domain. GTP-binding positions include 17 to 24 (AHIDAGKT), 88 to 92 (DTPGH), and 142 to 145 (NKMD).

Belongs to the TRAFAC class translation factor GTPase superfamily. Classic translation factor GTPase family. EF-G/EF-2 subfamily.

The protein localises to the cytoplasm. In terms of biological role, catalyzes the GTP-dependent ribosomal translocation step during translation elongation. During this step, the ribosome changes from the pre-translocational (PRE) to the post-translocational (POST) state as the newly formed A-site-bound peptidyl-tRNA and P-site-bound deacylated tRNA move to the P and E sites, respectively. Catalyzes the coordinated movement of the two tRNA molecules, the mRNA and conformational changes in the ribosome. The polypeptide is Elongation factor G (Buchnera aphidicola subsp. Baizongia pistaciae (strain Bp)).